A 646-amino-acid chain; its full sequence is bZIP transcription factor 39 (646 aa).

The Cytoplasmic portion of the chain corresponds to 1-311 (MAEPALLDPT…KSKSKTKTKK (311 aa)). A disordered region spans residues 25–172 (HELPLAGGGG…GGTVCEEEED (148 aa)). Residues 43–53 (LDGLEFDLPGD) are compositionally biased toward low complexity. The span at 59 to 69 (FLLRSPERDDS) shows a compositional bias: basic and acidic residues. The span at 71-98 (EGSAAGSGPTASPSSSPTTSASNSAVAN) shows a compositional bias: low complexity. The segment covering 103–113 (EVKHEESDEGR) has biased composition (basic and acidic residues). Residues 159-172 (DSDEGGTVCEEEED) show a composition bias toward acidic residues. Residues 172–232 (DERRAARLMR…AENATLRQQL (61 aa)) enclose the bZIP domain. Residues 174-205 (RRAARLMRNRESAQLSRQRKKRYVEELEEKVK) form a basic motif region. Residues 211-218 (INDLNSRI) are leucine-zipper. The interval 272-308 (LVPIPRLKPQQPVPSSKVVKKPESKKTVENKSKSKTK) is disordered. The segment covering 279–288 (KPQQPVPSSK) has biased composition (low complexity). A compositionally biased stretch (basic and acidic residues) spans 291–303 (KKPESKKTVENKS). A helical membrane pass occupies residues 312 to 332 (VASVSLLGLLLIMLVFGAFIP). Residues 333–646 (GFNHNFGMCG…FKSSSPHLVN (314 aa)) lie on the Lumenal side of the membrane. Asn371, Asn399, Asn525, Asn530, Asn565, and Asn571 each carry an N-linked (GlcNAc...) asparagine glycan. The disordered stretch occupies residues 560-585 (TGKTANNTEPFNRTSESSSKLPDSKP). Polar residues predominate over residues 562–585 (KTANNTEPFNRTSESSSKLPDSKP).

It belongs to the bZIP family. In terms of tissue distribution, highly expressed in leaf blade, and at lower levels in roots, leaf sheaths, flowers and seeds.

It is found in the endoplasmic reticulum membrane. It localises to the nucleus. Its function is as follows. Transcription factor involved in endoplasmic reticulum (ER) stress response. Acts as a ER stress sensor and activates the transcription factor BZIP50 and the chaperone BIP1. This chain is bZIP transcription factor 39, found in Oryza sativa subsp. japonica (Rice).